Here is a 160-residue protein sequence, read N- to C-terminus: S-ribosylhomocysteine lyase (160 aa).

Residues His57, His61, and Cys127 each coordinate Fe cation.

Belongs to the LuxS family. Homodimer. It depends on Fe cation as a cofactor.

It catalyses the reaction S-(5-deoxy-D-ribos-5-yl)-L-homocysteine = (S)-4,5-dihydroxypentane-2,3-dione + L-homocysteine. Involved in the synthesis of autoinducer 2 (AI-2) which is secreted by bacteria and is used to communicate both the cell density and the metabolic potential of the environment. The regulation of gene expression in response to changes in cell density is called quorum sensing. Catalyzes the transformation of S-ribosylhomocysteine (RHC) to homocysteine (HC) and 4,5-dihydroxy-2,3-pentadione (DPD). The chain is S-ribosylhomocysteine lyase from Streptococcus mutans serotype c (strain ATCC 700610 / UA159).